The sequence spans 530 residues: Probable basic-leucine zipper transcription factor L (530 aa).

2 stretches are compositionally biased toward low complexity: residues 1-17 and 24-39; these read MYSPSSPQSSEPMSPES and SINNSNSSNNSSANQS. The interval 1 to 76 is disordered; it reads MYSPSSPQSS…QSAALSRSRK (76 aa). The bZIP domain occupies 55-118; sequence VKKRQVRLLK…FETKSRLEFL (64 aa). Residues 56-77 form a basic motif region; the sequence is KKRQVRLLKNRQSAALSRSRKK. Positions 83–104 are leucine-zipper; sequence LESKAQELTHSTQELHVQYNKI. Disordered stretches follow at residues 142-177, 216-258, and 389-481; these read NNIKSHSRSNSSSSSLSSSPTTPNTTTTTTTSTTPV, SQNK…SPTP, and HHHH…SQIN. 2 stretches are compositionally biased toward low complexity: residues 149 to 176 and 220 to 247; these read RSNSSSSSLSSSPTTPNTTTTTTTSTTP and NNNNNNNNNNNNNNNNNNNNNNNNNTTN. A compositionally biased stretch (polar residues) spans 248–257; it reads LLDQQQQSPT. The span at 436 to 478 shows a compositional bias: low complexity; it reads SSSPSSSSTSSPSTSSPSTPKSMGFPSPIFIGSSGSGPSSSGS.

Belongs to the bZIP family.

It localises to the nucleus. Its function is as follows. Probable transcriptional regulator. This chain is Probable basic-leucine zipper transcription factor L (bzpL), found in Dictyostelium discoideum (Social amoeba).